The sequence spans 93 residues: YcgL domain-containing protein VV1058 (93 aa).

The 84-residue stretch at 1 to 84 (MLCSIYKSSK…PPENLLQQHK (84 aa)) folds into the YcgL domain. The interval 74 to 93 (PPPENLLQQHKERKAQQKND) is disordered.

This Vibrio vulnificus (strain YJ016) protein is YcgL domain-containing protein VV1058.